The primary structure comprises 463 residues: Asparagine--tRNA ligase (463 aa).

It belongs to the class-II aminoacyl-tRNA synthetase family. Homodimer.

It is found in the cytoplasm. It carries out the reaction tRNA(Asn) + L-asparagine + ATP = L-asparaginyl-tRNA(Asn) + AMP + diphosphate + H(+). In Acholeplasma laidlawii (strain PG-8A), this protein is Asparagine--tRNA ligase.